The primary structure comprises 228 residues: Phosphoribosylformylglycinamidine synthase subunit PurQ (228 aa).

In terms of domain architecture, Glutamine amidotransferase type-1 spans 2–225 (KAAVISFPGS…INQTEGADVR (224 aa)). C86 (nucleophile) is an active-site residue. Catalysis depends on residues H194 and E196.

As to quaternary structure, part of the FGAM synthase complex composed of 1 PurL, 1 PurQ and 2 PurS subunits.

The protein resides in the cytoplasm. It catalyses the reaction N(2)-formyl-N(1)-(5-phospho-beta-D-ribosyl)glycinamide + L-glutamine + ATP + H2O = 2-formamido-N(1)-(5-O-phospho-beta-D-ribosyl)acetamidine + L-glutamate + ADP + phosphate + H(+). The catalysed reaction is L-glutamine + H2O = L-glutamate + NH4(+). It functions in the pathway purine metabolism; IMP biosynthesis via de novo pathway; 5-amino-1-(5-phospho-D-ribosyl)imidazole from N(2)-formyl-N(1)-(5-phospho-D-ribosyl)glycinamide: step 1/2. Part of the phosphoribosylformylglycinamidine synthase complex involved in the purines biosynthetic pathway. Catalyzes the ATP-dependent conversion of formylglycinamide ribonucleotide (FGAR) and glutamine to yield formylglycinamidine ribonucleotide (FGAM) and glutamate. The FGAM synthase complex is composed of three subunits. PurQ produces an ammonia molecule by converting glutamine to glutamate. PurL transfers the ammonia molecule to FGAR to form FGAM in an ATP-dependent manner. PurS interacts with PurQ and PurL and is thought to assist in the transfer of the ammonia molecule from PurQ to PurL. In Lacticaseibacillus paracasei (strain ATCC 334 / BCRC 17002 / CCUG 31169 / CIP 107868 / KCTC 3260 / NRRL B-441) (Lactobacillus paracasei), this protein is Phosphoribosylformylglycinamidine synthase subunit PurQ.